A 677-amino-acid chain; its full sequence is Fermitin family homolog 1 (677 aa).

Residues 96-653 enclose the FERM domain; sequence MLRLRLPNAK…HEYIGGYIFL (558 aa). Positions 157–181 are disordered; the sequence is KEPVIEDILNLESSSTSSGSPVSPG. Low complexity predominate over residues 169-181; that stretch reads SSSTSSGSPVSPG. Phosphoserine is present on residues Ser170 and Ser179. The PH domain maps to 377–473; the sequence is KLFRPKKLML…WMAACILASK (97 aa).

This sequence belongs to the kindlin family. As to quaternary structure, interacts with the cytoplasmic domain of integrins ITGB1 and ITGB3.

The protein resides in the cytoplasm. Its subcellular location is the cytoskeleton. It localises to the cell junction. It is found in the focal adhesion. The protein localises to the cell projection. The protein resides in the ruffle membrane. In terms of biological role, involved in cell adhesion. Contributes to integrin activation. When coexpressed with talin, potentiates activation of ITGA2B. Required for normal keratinocyte proliferation. Required for normal polarization of basal keratinocytes in skin, and for normal cell shape. Required for normal adhesion of keratinocytes to fibronectin and laminin, and for normal keratinocyte migration to wound sites. The chain is Fermitin family homolog 1 (Fermt1) from Mus musculus (Mouse).